We begin with the raw amino-acid sequence, 138 residues long: MAKPILRIGSRKNTRSGSRKNVRRIPKGVIHVQASFNNTIVTVTDVRGRVISWSSAGTCGFKGTRRGTPFAAQTAAGNAIRAVVDQGMQRAEVRIKGPGLGRDAALRAIRRSGILLSFVRDVTPMPHNGCRPPKKRRV.

Positions 1–23 (MAKPILRIGSRKNTRSGSRKNVR) are disordered. The span at 9–23 (GSRKNTRSGSRKNVR) shows a compositional bias: basic residues.

The protein belongs to the universal ribosomal protein uS11 family. In terms of assembly, part of the 30S ribosomal subunit.

It localises to the plastid. The protein localises to the chloroplast. This chain is Small ribosomal subunit protein uS11c, found in Barbarea verna (Land cress).